The sequence spans 64 residues: MAKNKGVRIVITLECNECRSNPAKRSPGVSRYTTEKNRRNTTERLEIKKFCPHCNKSTPHKEIK.

This sequence belongs to the bacterial ribosomal protein bL33 family.

The polypeptide is Large ribosomal subunit protein bL33 (Prochlorococcus marinus (strain MIT 9313)).